We begin with the raw amino-acid sequence, 86 residues long: RNA-binding protein Hfq (86 aa).

The region spanning 9–68 (DPYLNTLRKEKVGVSIYLVNGIKLQGTIESFDQFVILLKNTVSQMVYKHAISTVVPVRPI) is the Sm domain.

It belongs to the Hfq family. Homohexamer.

In terms of biological role, RNA chaperone that binds small regulatory RNA (sRNAs) and mRNAs to facilitate mRNA translational regulation in response to envelope stress, environmental stress and changes in metabolite concentrations. Also binds with high specificity to tRNAs. The sequence is that of RNA-binding protein Hfq from Pseudomonas fluorescens (strain Pf0-1).